The sequence spans 61 residues: Metallothionein-2 (61 aa).

An N-acetylmethionine modification is found at M1. The segment at 1–29 (MDPNCSCASDGSCSCAGACKCKQCKCTSC) is beta. A divalent metal cation contacts are provided by C5, C7, C13, C15, C19, C21, C24, C26, C29, C33, C34, C36, C37, C41, C44, C48, C50, and C57. The segment at 30–61 (KKSCCSCCPVGCAKCSQGCICKEASDKCSCCA) is alpha. A Phosphoserine modification is found at S58. A divalent metal cation contacts are provided by C59 and C60.

It belongs to the metallothionein superfamily. Type 1 family.

Functionally, metallothioneins have a high content of cysteine residues that bind various heavy metals; these proteins are transcriptionally regulated by both heavy metals and glucocorticoids. In Mus musculus (Mouse), this protein is Metallothionein-2 (Mt2).